Here is a 509-residue protein sequence, read N- to C-terminus: MNLLDPFMKMTDEQEKGLSGAPSPTMSEDSAGSPCPSGSGSDTENTRPQENTFPKGEPDLKKESEEDKFPVCIREAVSQVLKGYDWTLVPMPVRVNGSSKNKPHVKRPMNAFMVWAQAARRKLADQYPHLHNAELSKTLGKLWRLLNESEKRPFVEEAERLRVQHKKDHPDYKYQPRRRKSVKNGQAEAEEATEQTHISPNAIFKALQADSPHSSSGMSEVHSPGEHSGQSQGPPTPPTTPKTDVQPGKADLKREGRPLPEGGRQPPIDFRDVDIGELSSDVISNIETFDVNEFDQYLPPNGHPGVPATHGQVTYTGSYGISSTAATPASAGHVWMSKQQAPPPPPQQPPQAPPAPQAPPQPQAAPPQQPAAPPQQPQAHTLTTLSSEPGQSQRTHIKTEQLSPSHYSEQQQHSPQQIAYSPFNLPHYSPSYPPITRSQYDYTDHQNSSSYYSHAAGQGTGLYSTFTYMNPAQRPMYTPIADTSGVPSIPQTHSPQHWEQPVYTQLTRP.

Disordered stretches follow at residues 1–67 (MNLL…SEED) and 160–273 (RLRV…FRDV). The span at 30–41 (SAGSPCPSGSGS) shows a compositional bias: low complexity. Polar residues predominate over residues 42-52 (DTENTRPQENT). Basic and acidic residues-rich tracts occupy residues 56 to 67 (GEPDLKKESEED) and 160 to 174 (RLRVQHKKDHPDYKY). The dimerization (DIM) stretch occupies residues 63-103 (ESEEDKFPVCIREAVSQVLKGYDWTLVPMPVRVNGSSKNKP). The interval 63 to 103 (ESEEDKFPVCIREAVSQVLKGYDWTLVPMPVRVNGSSKNKP) is PQA. Phosphoserine is present on serine 64. Positions 105–173 (VKRPMNAFMV…QHKKDHPDYK (69 aa)) form a DNA-binding region, HMG box. Position 211 is a phosphoserine (serine 211). Residues 224–307 (PGEHSGQSQG…LPPNGHPGVP (84 aa)) are transactivation domain (TAM). Short sequence motifs (9aaTAD) lie at residues 275–284 (IGELSSDVIS) and 290–298 (DVNEFDQYL). The tract at residues 330 to 415 (SAGHVWMSKQ…HYSEQQQHSP (86 aa)) is disordered. Over residues 341–376 (APPPPPQQPPQAPPAPQAPPQPQAAPPQQPAAPPQQ) the composition is skewed to pro residues. A compositionally biased stretch (polar residues) spans 380–415 (HTLTTLSSEPGQSQRTHIKTEQLSPSHYSEQQQHSP). The interval 394-509 (RTHIKTEQLS…QPVYTQLTRP (116 aa)) is transactivation domain (TAC). A Glycyl lysine isopeptide (Lys-Gly) (interchain with G-Cter in ubiquitin) cross-link involves residue lysine 398. Positions 460–468 (TGLYSTFTY) match the 9aaTAD 3 motif. A disordered region spans residues 479-509 (PIADTSGVPSIPQTHSPQHWEQPVYTQLTRP). Residues 485–509 (GVPSIPQTHSPQHWEQPVYTQLTRP) are compositionally biased toward polar residues.

As to quaternary structure, homodimer; homodimerization is required for activity. Interacts (via C-terminus) with ZNF219; forming a complex that binds to the COL2A1 promoter and activates COL2A1 expression. Interacts with DDRGK1. Interacts with EP300/p300. Interacts with beta-catenin (CTNNB1); inhibiting CTNNB1 activity by competing with the binding sites of TCF/LEF within CTNNB1. Post-translationally, acetylated; acetylation impairs nuclear localization and ability to transactivate expression of target genes. Deacetylated by SIRT1. In terms of processing, phosphorylation at Ser-64 and Ser-211 by PKA increases transcriptional activity and may help delay chondrocyte maturation downstream of PTHLH/PTHrP signaling. Phosphorylation at either Ser-64 or Ser-211 is required for sumoylation, but phosphorylation is not dependent on sumoylation. Phosphorylated on tyrosine residues; tyrosine dephosphorylation by PTPN11/SHP2 blocks SOX9 phosphorylation by PKA and subsequent SUMOylation. Ubiquitinated; ubiquitination leads to proteasomal degradation and is negatively regulated by DDRGK1. Post-translationally, sumoylated; phosphorylation at either Ser-64 or Ser-211 is required for sumoylation. Sumoylation is induced by BMP signaling pathway.

It localises to the nucleus. Its function is as follows. Transcription factor that plays a key role in chondrocytes differentiation and skeletal development. Specifically binds the 5'-ACAAAG-3' DNA motif present in enhancers and super-enhancers and promotes expression of genes important for chondrogenesis, including cartilage matrix protein-coding genes COL2A1, COL4A2, COL9A1, COL11A2 and ACAN, SOX5 and SOX6. Also binds to some promoter regions. Plays a central role in successive steps of chondrocyte differentiation. Absolutely required for precartilaginous condensation, the first step in chondrogenesis during which skeletal progenitors differentiate into prechondrocytes. Together with SOX5 and SOX6, required for overt chondrogenesis when condensed prechondrocytes differentiate into early stage chondrocytes, the second step in chondrogenesis. Later, required to direct hypertrophic maturation and block osteoblast differentiation of growth plate chondrocytes: maintains chondrocyte columnar proliferation, delays prehypertrophy and then prevents osteoblastic differentiation of chondrocytes by lowering beta-catenin (CTNNB1) signaling and RUNX2 expression. Also required for chondrocyte hypertrophy, both indirectly, by keeping the lineage fate of chondrocytes, and directly, by remaining present in upper hypertrophic cells and transactivating COL10A1 along with MEF2C. Low lipid levels are the main nutritional determinant for chondrogenic commitment of skeletal progenitor cells: when lipids levels are low, FOXO (FOXO1 and FOXO3) transcription factors promote expression of SOX9, which induces chondrogenic commitment and suppresses fatty acid oxidation. Mechanistically, helps, but is not required, to remove epigenetic signatures of transcriptional repression and deposit active promoter and enhancer marks at chondrocyte-specific genes. Acts in cooperation with the Hedgehog pathway-dependent GLI (GLI1 and GLI3) transcription factors. In addition to cartilage development, also acts as a regulator of proliferation and differentiation in epithelial stem/progenitor cells: involved in the lung epithelium during branching morphogenesis, by balancing proliferation and differentiation and regulating the extracellular matrix. Controls epithelial branching during kidney development. The sequence is that of Transcription factor SOX-9 from Homo sapiens (Human).